A 142-amino-acid polypeptide reads, in one-letter code: Neuritin (142 aa).

The signal sequence occupies residues 1-27 (MGLTLSGRYISLFLAVQIAYLLQAVRA). Residue Ala-112 is the site of GPI-anchor amidated alanine attachment. A propeptide spans 113-142 (GGNGAIRSSVPFGVTLLITALSALVTWMQF) (removed in mature form).

This sequence belongs to the neuritin family.

It is found in the cell membrane. It localises to the synapse. Modulates postsynaptic dendritic arbor elaboration and synaptic maturation. In Danio rerio (Zebrafish), this protein is Neuritin (nrn1).